A 67-amino-acid chain; its full sequence is DNA-directed RNA polymerase subunit Rpo10 (67 aa).

Positions 7, 10, 44, and 45 each coordinate Zn(2+).

This sequence belongs to the archaeal Rpo10/eukaryotic RPB10 RNA polymerase subunit family. Part of the RNA polymerase complex. The cofactor is Zn(2+).

It is found in the cytoplasm. It catalyses the reaction RNA(n) + a ribonucleoside 5'-triphosphate = RNA(n+1) + diphosphate. Its function is as follows. DNA-dependent RNA polymerase (RNAP) catalyzes the transcription of DNA into RNA using the four ribonucleoside triphosphates as substrates. The polypeptide is DNA-directed RNA polymerase subunit Rpo10 (Caldivirga maquilingensis (strain ATCC 700844 / DSM 13496 / JCM 10307 / IC-167)).